A 430-amino-acid chain; its full sequence is Ribosomal protein uS12 methylthiotransferase RimO (430 aa).

In terms of domain architecture, MTTase N-terminal spans 2–119 (ISVYSISLGC…WPAMLAHALK (118 aa)). 6 residues coordinate [4Fe-4S] cluster: Cys-11, Cys-46, Cys-81, Cys-145, Cys-149, and Cys-152. A Radical SAM core domain is found at 131–361 (STGPSYAWLK…MEVQAEISEE (231 aa)). The 67-residue stretch at 364–430 (AVHEGTRQQV…TRTYDLVALA (67 aa)) folds into the TRAM domain.

Belongs to the methylthiotransferase family. RimO subfamily. [4Fe-4S] cluster is required as a cofactor.

It is found in the cytoplasm. It catalyses the reaction L-aspartate(89)-[ribosomal protein uS12]-hydrogen + (sulfur carrier)-SH + AH2 + 2 S-adenosyl-L-methionine = 3-methylsulfanyl-L-aspartate(89)-[ribosomal protein uS12]-hydrogen + (sulfur carrier)-H + 5'-deoxyadenosine + L-methionine + A + S-adenosyl-L-homocysteine + 2 H(+). Functionally, catalyzes the methylthiolation of an aspartic acid residue of ribosomal protein uS12. This Nitratidesulfovibrio vulgaris (strain ATCC 29579 / DSM 644 / CCUG 34227 / NCIMB 8303 / VKM B-1760 / Hildenborough) (Desulfovibrio vulgaris) protein is Ribosomal protein uS12 methylthiotransferase RimO.